We begin with the raw amino-acid sequence, 752 residues long: Peptidyl-prolyl cis-trans isomerase G (752 aa).

The 166-residue stretch at 11–176 (FFDIAINNQP…AEVRILSCGE (166 aa)) folds into the PPIase cyclophilin-type domain. The span at 182–193 (KVKKEEKKRHKS) shows a compositional bias: basic residues. Residues 182-752 (KVKKEEKKRH…SPGTDEDKSG (571 aa)) are disordered. Over residues 194–214 (SSSSSSSDSDSSSDSQSSSDS) the composition is skewed to low complexity. The segment covering 226-251 (RKRKKKHRKNSRKHKKEKKKRKKSKK) has biased composition (basic residues). Residues Ser-252, Ser-254, Ser-255, Ser-257, and Ser-288 each carry the phosphoserine modification. Positions 290–308 (PKADDKERKNREREREREC) are enriched in basic and acidic residues. Residue Ser-313 is modified to Phosphoserine. Over residues 327-345 (FGRKIKGRGPRRYRTPSRS) the composition is skewed to basic residues. Composition is skewed to basic and acidic residues over residues 346–366 (RSRD…EMQR) and 377–447 (RWIK…DKYN). Ser-354 bears the Phosphoserine mark. Thr-356 carries the phosphothreonine modification. The residue at position 384 (Ser-384) is a Phosphoserine. A Glycyl lysine isopeptide (Lys-Gly) (interchain with G-Cter in SUMO2) cross-link involves residue Lys-390. A phosphoserine mark is found at Ser-395, Ser-411, and Ser-413. Positions 448–461 (KNKVKKRGKSKSRS) are enriched in basic residues. Composition is skewed to basic and acidic residues over residues 462–552 (KSKE…DLTK) and 577–598 (RSHD…QEYR). Positions 599 to 625 (RRGRSRSRDRRTPGRSRSKDRRRRRRD) are enriched in basic residues. A compositionally biased stretch (basic and acidic residues) spans 626–682 (SRSSEREESQSRNKEKYRSQDSKSSHRKENSEGEKRMYSKSRDHSSSNNNREKKADI). Residues Ser-685 and Ser-688 each carry the phosphoserine modification. Over residues 685–705 (SPVSKTKQSSQDNEVKSSTLK) the composition is skewed to polar residues. Lys-691 participates in a covalent cross-link: Glycyl lysine isopeptide (Lys-Gly) (interchain with G-Cter in SUMO2). Phosphoserine occurs at positions 694, 742, and 743. Residues 706-752 (NQEDEKTRSPVEKENQKSKGQENDHVHDKNKKCDHESSPGTDEDKSG) show a composition bias toward basic and acidic residues. Position 746 is a phosphothreonine (Thr-746). Residue Ser-751 is modified to Phosphoserine.

In terms of assembly, interacts with CLK1, PNN and with the phosphorylated C-terminal domain of RNA polymerase II.

It is found in the nucleus matrix. It localises to the nucleus speckle. The catalysed reaction is [protein]-peptidylproline (omega=180) = [protein]-peptidylproline (omega=0). With respect to regulation, inhibited by cyclosporin A (CsA). Functionally, PPIase that catalyzes the cis-trans isomerization of proline imidic peptide bonds in oligopeptides and may therefore assist protein folding. May be implicated in the folding, transport, and assembly of proteins. May play an important role in the regulation of pre-mRNA splicing. In Rattus norvegicus (Rat), this protein is Peptidyl-prolyl cis-trans isomerase G (Ppig).